We begin with the raw amino-acid sequence, 382 residues long: Sialidase (382 aa).

Residue Arg37 participates in substrate binding. Cys42 and Cys103 are oxidised to a cystine. Asp62 functions as the Proton acceptor in the catalytic mechanism. BNR repeat units follow at residues 71-82, 145-156, and 210-220; these read ARSTDGGKTWNK, YKSTDDGVTFSK, and IYSTDGITWSL. Arg246 lines the substrate pocket. The stretch at 254-265 is one BNR 4 repeat; that stretch reads FETKDFGKTWTE. Arg309 is a substrate binding site. The active-site Nucleophile is the Tyr342. Glu361 is a catalytic residue.

Belongs to the glycosyl hydrolase 33 family. As to quaternary structure, monomer.

It carries out the reaction Hydrolysis of alpha-(2-&gt;3)-, alpha-(2-&gt;6)-, alpha-(2-&gt;8)- glycosidic linkages of terminal sialic acid residues in oligosaccharides, glycoproteins, glycolipids, colominic acid and synthetic substrates.. Functionally, cleaves the terminal sialic acid (N-acetyl neuraminic acid) from carbohydrate chains in glycoproteins providing free sialic acid which can be used as carbon and energy sources. Sialidases have been suggested to be pathogenic factors in microbial infections. The protein is Sialidase (nanH) of Salmonella typhimurium (strain LT2 / SGSC1412 / ATCC 700720).